Here is a 248-residue protein sequence, read N- to C-terminus: Pyridoxine 5'-phosphate synthase (248 aa).

N12 contacts 3-amino-2-oxopropyl phosphate. Residue D14–H15 participates in 1-deoxy-D-xylulose 5-phosphate binding. R23 contacts 3-amino-2-oxopropyl phosphate. H48 (proton acceptor) is an active-site residue. 1-deoxy-D-xylulose 5-phosphate contacts are provided by R50 and H55. The active-site Proton acceptor is the E75. T105 contacts 1-deoxy-D-xylulose 5-phosphate. The active-site Proton donor is the H196. Residues G197 and G218–H219 each bind 3-amino-2-oxopropyl phosphate.

It belongs to the PNP synthase family. Homooctamer; tetramer of dimers.

The protein localises to the cytoplasm. The enzyme catalyses 3-amino-2-oxopropyl phosphate + 1-deoxy-D-xylulose 5-phosphate = pyridoxine 5'-phosphate + phosphate + 2 H2O + H(+). It functions in the pathway cofactor biosynthesis; pyridoxine 5'-phosphate biosynthesis; pyridoxine 5'-phosphate from D-erythrose 4-phosphate: step 5/5. Catalyzes the complicated ring closure reaction between the two acyclic compounds 1-deoxy-D-xylulose-5-phosphate (DXP) and 3-amino-2-oxopropyl phosphate (1-amino-acetone-3-phosphate or AAP) to form pyridoxine 5'-phosphate (PNP) and inorganic phosphate. This Pseudomonas aeruginosa (strain LESB58) protein is Pyridoxine 5'-phosphate synthase.